The following is a 977-amino-acid chain: Alanine--tRNA ligase (977 aa).

Residues 512 to 535 are disordered; that stretch reads SQVDSKLQSSTPAGTGSYDSKQVS. 4 residues coordinate Zn(2+): His618, His622, Cys720, and His724.

This sequence belongs to the class-II aminoacyl-tRNA synthetase family. Zn(2+) is required as a cofactor.

Its subcellular location is the cytoplasm. The enzyme catalyses tRNA(Ala) + L-alanine + ATP = L-alanyl-tRNA(Ala) + AMP + diphosphate. Catalyzes the attachment of alanine to tRNA(Ala) in a two-step reaction: alanine is first activated by ATP to form Ala-AMP and then transferred to the acceptor end of tRNA(Ala). Also edits incorrectly charged Ser-tRNA(Ala) and Gly-tRNA(Ala) via its editing domain. The chain is Alanine--tRNA ligase from Leptospira interrogans serogroup Icterohaemorrhagiae serovar copenhageni (strain Fiocruz L1-130).